Reading from the N-terminus, the 137-residue chain is Phospholipase A2 homolog PLA2-03 (137 aa).

The signal sequence occupies residues 1 to 16 (MRTLWIVAVLLVGVEG). Intrachain disulfides connect Cys42/Cys131, Cys44/Cys60, Cys59/Cys111, Cys65/Cys137, Cys66/Cys104, Cys73/Cys97, and Cys91/Cys102. Positions 121 to 133 (KKYKIFPKFLCKK) are important for membrane-damaging activities in eukaryotes and bacteria; heparin-binding.

It belongs to the phospholipase A2 family. Group II subfamily. K49 sub-subfamily. In terms of tissue distribution, expressed by the venom gland.

Its subcellular location is the secreted. Functionally, snake venom phospholipase A2 homolog that lacks enzymatic activity. Is myotoxic and displays edema-inducing activities in mouse paw. A model of myotoxic mechanism has been proposed: an apo Lys49-PLA2 is activated by the entrance of a hydrophobic molecule (e.g. fatty acid) at the hydrophobic channel of the protein leading to a reorientation of a monomer. This reorientation causes a transition between 'inactive' to 'active' states, causing alignment of C-terminal and membrane-docking sites (MDoS) side-by-side and putting the membrane-disruption sites (MDiS) in the same plane, exposed to solvent and in a symmetric position for both monomers. The MDoS region stabilizes the toxin on membrane by the interaction of charged residues with phospholipid head groups. Subsequently, the MDiS region destabilizes the membrane with penetration of hydrophobic residues. This insertion causes a disorganization of the membrane, allowing an uncontrolled influx of ions (i.e. calcium and sodium), and eventually triggering irreversible intracellular alterations and cell death. The protein is Phospholipase A2 homolog PLA2-03 of Ovophis okinavensis (Ryukyu Island pit viper).